We begin with the raw amino-acid sequence, 129 residues long: MAPKAEKKPASKAPAEKKPAAKKTASSDSKKRTKTRKETYSSYIYKVLKQTHPDTGISQKAMSIMNSFVNDIFERVASEASKLAAYNKKSTISAREIQTAVRLILPGELAKHAVSEATRTITKYSSAAN.

Over residues 1–19 (MAPKAEKKPASKAPAEKKP) the composition is skewed to basic and acidic residues. The interval 1–37 (MAPKAEKKPASKAPAEKKPAAKKTASSDSKKRTKTRK) is disordered. 2 positions are modified to N6-acetyllysine; alternate: lysine 7 and lysine 8. Residues lysine 7 and lysine 8 each participate in a glycyl lysine isopeptide (Lys-Gly) (interchain with G-Cter in SUMO); alternate cross-link. Position 11 is a phosphoserine (serine 11). At lysine 12 the chain carries N6-acetyllysine. N6-acetyllysine; alternate is present on lysine 17. Residue lysine 17 forms a Glycyl lysine isopeptide (Lys-Gly) (interchain with G-Cter in SUMO); alternate linkage. Lysine 18 is covalently cross-linked (Glycyl lysine isopeptide (Lys-Gly) (interchain with G-Cter in SUMO)). Lysine 123 is covalently cross-linked (Glycyl lysine isopeptide (Lys-Gly) (interchain with G-Cter in ubiquitin)).

Belongs to the histone H2B family. As to quaternary structure, the nucleosome is a histone octamer containing two molecules each of H2A, H2B, H3 and H4 assembled in one H3-H4 heterotetramer and two H2A-H2B heterodimers. The octamer wraps approximately 147 bp of DNA. In terms of processing, monoubiquitinated by the UBC2-BRE1 complex to form H2BK123ub1. H2BK123ub1 gives a specific tag for epigenetic transcriptional activation and is also prerequisite for H3K4me and H3K79me formation. H2BK123ub1 also modulates the formation of double-strand breaks during meiosis and is a prerequisite for DNA-damage checkpoint activation. Post-translationally, phosphorylated by STE20 to form H2BS10ph during progression through meiotic prophase. May be correlated with chromosome condensation. Acetylated by GCN5 to form H2BK11ac and H2BK16ac. H2BK16ac can also be formed by ESA1. Acetylation of N-terminal lysines and particularly formation of H2BK11acK16ac has a positive effect on transcription. In terms of processing, sumoylation to form H2BK6su or H2BK7su, and probably also H2BK16su or H2BK17su, occurs preferentially near the telomeres and represses gene transcription.

The protein localises to the nucleus. It localises to the chromosome. Core component of nucleosome. Nucleosomes wrap and compact DNA into chromatin, limiting DNA accessibility to the cellular machineries which require DNA as a template. Histones thereby play a central role in transcription regulation, DNA repair, DNA replication and chromosomal stability. DNA accessibility is regulated via a complex set of post-translational modifications of histones, also called histone code, and nucleosome remodeling. This Meyerozyma guilliermondii (strain ATCC 6260 / CBS 566 / DSM 6381 / JCM 1539 / NBRC 10279 / NRRL Y-324) (Yeast) protein is Histone H2B.2 (HTB2).